Reading from the N-terminus, the 178-residue chain is uncharacterized protein (178 aa).

The span at 1–13 (MEVASSSSACQFD) shows a compositional bias: polar residues. Disordered stretches follow at residues 1 to 24 (MEVASSSSACQFDNLNNNNNELKP) and 47 to 114 (WPSR…KKEK).

This is an uncharacterized protein from Caenorhabditis elegans.